Here is a 393-residue protein sequence, read N- to C-terminus: S-adenosylmethionine synthase 3 (393 aa).

Mg(2+) is bound at residue glutamate 9. An ATP-binding site is contributed by histidine 15. Residue glutamate 43 participates in K(+) binding. L-methionine contacts are provided by glutamate 56 and glutamine 99. Residues 167–169 (DGK), 235–238 (SGRF), aspartate 246, 252–253 (RK), alanine 269, lysine 273, and lysine 277 contribute to the ATP site. Aspartate 246 lines the L-methionine pocket. Lysine 277 is a binding site for L-methionine.

Belongs to the AdoMet synthase family. Homotetramer. The cofactor is Mn(2+). Requires Mg(2+) as cofactor. It depends on Co(2+) as a cofactor. K(+) is required as a cofactor.

It is found in the cytoplasm. It catalyses the reaction L-methionine + ATP + H2O = S-adenosyl-L-methionine + phosphate + diphosphate. It participates in amino-acid biosynthesis; S-adenosyl-L-methionine biosynthesis; S-adenosyl-L-methionine from L-methionine: step 1/1. In terms of biological role, catalyzes the formation of S-adenosylmethionine from methionine and ATP. The reaction comprises two steps that are both catalyzed by the same enzyme: formation of S-adenosylmethionine (AdoMet) and triphosphate, and subsequent hydrolysis of the triphosphate. This chain is S-adenosylmethionine synthase 3 (SAM3), found in Petunia hybrida (Petunia).